A 2090-amino-acid polypeptide reads, in one-letter code: Host cell factor 1 (2090 aa).

The residue at position 2 (Ala-2) is an N-acetylalanine. Residue Ser-6 is modified to Phosphoserine. Kelch repeat units follow at residues 44–89 (LIVV…GFVC), 93–140 (RLLV…RLGH), 148–194 (KCYL…ITYG), 217–265 (KLVI…TIGN), and 266–313 (KMYV…LMDT). Glycyl lysine isopeptide (Lys-Gly) (interchain with G-Cter in ubiquitin) cross-links involve residues Lys-105, Lys-163, and Lys-244. Lys-282 is covalently cross-linked (Glycyl lysine isopeptide (Lys-Gly) (interchain with G-Cter in SUMO2)). Lys-288 is modified (N6-acetyllysine). Lys-363 is covalently cross-linked (Glycyl lysine isopeptide (Lys-Gly) (interchain with G-Cter in ubiquitin)). Positions 366 to 469 (PPARVQLVRA…TIQVLPTVPG (104 aa)) constitute a Fibronectin type-III 1 domain. A disordered region spans residues 407-434 (ATATSPTPNPVPSVPANPPKSPAPAAAA). Phosphoserine is present on Ser-411. Positions 413–428 (TPNPVPSVPANPPKSP) are enriched in pro residues. A required for interaction with OGT region spans residues 500–550 (LVTMRPAGQAGKAPVTVTSLPASVRMVVPTQSAQGTVIGSNPQMSGMAALA). Residues Arg-504 and Arg-524 each carry the omega-N-methylarginine modification. Ser-598, Ser-666, and Ser-669 each carry phosphoserine. The interaction with SIN3A stretch occupies residues 610–722 (LKTAAAQVGT…KGPLPAGTIL (113 aa)). Residues 750 to 902 (ILGISSVSPS…SLAGAGAHST (153 aa)) form an interaction with ZBTB17 region. N6-acetyllysine is present on Lys-813. The segment at 813–912 (KIITAVPKIA…SASLATPITT (100 aa)) is interaction with GABP2. HCF repeat repeat units follow at residues 1010 to 1035 (TLVC…TVVA), 1072 to 1097 (VRVC…ATSN), and 1101 to 1126 (QHGC…AMSS). The interval 1098–1140 (MAGQHGCSNPPCETHETGTTSTATTAMSSMGTGQQRDTRHTSS) is disordered. Over residues 1114–1130 (TGTTSTATTAMSSMGTG) the composition is skewed to low complexity. Residues 1157–1182 (TQGTVKPQCQTQQANMTNTTMTVQAT) form an HCF repeat 4; degenerate repeat. Residue Ser-1204 is modified to Phosphoserine. Arg-1216 bears the Asymmetric dimethylarginine mark. Ser-1223 carries the post-translational modification Phosphoserine. HCF repeat repeat units lie at residues 1295–1320 (TQVC…SNAG) and 1323–1348 (QRVC…ATSN). 2 disordered regions span residues 1302 to 1374 (PCET…TTST) and 1444 to 1486 (TVTS…TTVS). Residues 1308–1321 (TGTTNTATTSNAGS) are compositionally biased toward low complexity. One copy of the HCF repeat 7; degenerate repeat lies at 1358–1383 (QQPAGGRPCETHQTTSTGTTMSVSVG). The HCF repeat 8 repeat unit spans residues 1423-1448 (QRVCSNPPCETHETGTTHTATTVTSN). The span at 1465–1475 (VVSTQGDSANI) shows a compositional bias: polar residues. Positions 1476–1486 (TSSSGITTTVS) are enriched in low complexity. The residue at position 1500 (Thr-1500) is a Phosphothreonine. Ser-1506, Ser-1559, and Ser-1826 each carry phosphoserine. Fibronectin type-III domains lie at 1853–1943 (PPPP…TCLP) and 1945–2061 (FPGA…TSKD). Glycyl lysine isopeptide (Lys-Gly) (interchain with G-Cter in ubiquitin) cross-links involve residues Lys-1862 and Lys-1863. Ser-1893 is subject to Phosphoserine. Positions 2049–2090 (ATQVRWLQETSKDSSGTKPASKRPMSSPEMKSAPKKSKADGQ) are disordered. N6-acetyllysine is present on Lys-2060. Residue Lys-2079 forms a Glycyl lysine isopeptide (Lys-Gly) (interchain with G-Cter in SUMO2) linkage.

Composed predominantly of six polypeptides ranging from 110 to 150 kDa and a minor 300 kDa polypeptide. The majority of N- and C-terminal cleavage products remain tightly, albeit non-covalently, associated. Interacts with POU2F1, CREB3, ZBTB17, EGR2, E2F4, CREBZF, SP1, GABP2, Sin3 HDAC complex (SIN3A, HDAC1, HDAC2, SUDS3), SAP30, SIN3B and FHL2. Component of a MLL1 complex, composed of at least the core components KMT2A/MLL1, ASH2L, HCFC1, WDR5 and RBBP5, as well as the facultative components BACC1, CHD8, DPY30, E2F6, HCFC2, HSP70, INO80C, KANSL1, LAS1L, MAX, MCRS1, MEN1, MGA, KAT8, PELP1, PHF20, PRP31, RING2, RUVBL1, RUVBL2, SENP3, TAF1, TAF4, TAF6, TAF7, TAF9 and TEX10. Component of a THAP1/THAP3-HCFC1-OGT complex that is required for the regulation of the transcriptional activity of RRM1. Interacts directly with THAP3 (via its HBM). Interacts (via the Kelch-repeat domain) with THAP1 (via the HBM); the interaction recruits HCHC1 to the RRM1. Interacts directly with OGT; the interaction, which requires the HCFC1 cleavage site domain, glycosylates and promotes the proteolytic processing of HCFC1 and retains OGT in the nucleus. Component of the SET1 complex, at least composed of the catalytic subunit (SETD1A or SETD1B), WDR5, WDR82, RBBP5, ASH2L, CXXC1, HCFC1 and DPY30. Component of the NSL complex at least composed of MOF/KAT8, KANSL1, KANSL2, KANSL3, MCRS1, PHF20, OGT1/OGT, WDR5 and HCFC1. Component of a complex at least composed of ZNF335, HCFC1, CCAR2, EMSY, MKI67, RBBP5, ASH2L and WDR5; the complex is formed as a result of interactions between components of a nuclear receptor-mediated transcription complex and a histone methylation complex. Within the complex interacts with ZNF335. Interacts with TET2 and TET3. Interacts with HCFC1R1. Interacts with THAP11. Interacts (via Kelch domain) with KMT2E (via HBM motif). Interacts with E2F1. Accessory scaffold component of the polycomb repressive deubiquitinase (PR-DUB) complex, at least composed of BAP1, one of ASXL1, ASXL2 or (probably) ASXL3 and one of MBD5 or MBD6; the PR-DUB core associates with a number of accessory proteins, including FOXK1, FOXK2, KDM1B, HCFC1, YY1 and OGT. Interacts with YY1 (via Gly-rich region); the interaction is direct. Interacts with BAP1 (via HBM-like motif). Post-translationally, proteolytically cleaved at one or several PPCE--THET sites within the HCF repeats. Cleavage is promoted by O-glycosylation. Further cleavage of the primary N- and C-terminal chains results in a 'trimming' and accumulation of the smaller chains. Cleavage is promoted by O-glycosylation. In terms of processing, O-glycosylated. GlcNAcylation by OGT promotes proteolytic processing. Ubiquitinated. Lys-1862 and Lys-1863 are ubiquitinated both via 'Lys-48'- and 'Lys-63'-linked polyubiquitin chains. BAP1 mediated deubiquitination of 'Lys-48'-linked polyubiquitin chains; deubiquitination by BAP1 does not seem to stabilize the protein.

The protein localises to the cytoplasm. It is found in the nucleus. In terms of biological role, transcriptional coregulator. Serves as a scaffold protein, bridging interactions between transcription factors, including THAP11 and ZNF143, and transcriptional coregulators. Involved in control of the cell cycle. Also antagonizes transactivation by ZBTB17 and GABP2; represses ZBTB17 activation of the p15(INK4b) promoter and inhibits its ability to recruit p300. Coactivator for EGR2 and GABP2. Tethers the chromatin modifying Set1/Ash2 histone H3 'Lys-4' methyltransferase (H3K4me) and Sin3 histone deacetylase (HDAC) complexes (involved in the activation and repression of transcription respectively) together. As part of the NSL complex it may be involved in acetylation of nucleosomal histone H4 on several lysine residues. Recruits KMT2E to E2F1 responsive promoters promoting transcriptional activation and thereby facilitates G1 to S phase transition. Modulates expression of homeobox protein PDX1, perhaps acting in concert with transcription factor E2F1, thereby regulating pancreatic beta-cell growth and glucose-stimulated insulin secretion. May negatively modulate transcriptional activity of FOXO3. This Mesocricetus auratus (Golden hamster) protein is Host cell factor 1.